The sequence spans 144 residues: Small ribosomal subunit protein uS12 (144 aa).

The residue at position 103 (D103) is a 3-methylthioaspartic acid. The disordered stretch occupies residues 125-144 (QQGRSRYGAKKGKAAPAKKK). Positions 131-144 (YGAKKGKAAPAKKK) are enriched in basic residues.

It belongs to the universal ribosomal protein uS12 family. Part of the 30S ribosomal subunit. Contacts proteins S8 and S17. May interact with IF1 in the 30S initiation complex.

With S4 and S5 plays an important role in translational accuracy. Its function is as follows. Interacts with and stabilizes bases of the 16S rRNA that are involved in tRNA selection in the A site and with the mRNA backbone. Located at the interface of the 30S and 50S subunits, it traverses the body of the 30S subunit contacting proteins on the other side and probably holding the rRNA structure together. The combined cluster of proteins S8, S12 and S17 appears to hold together the shoulder and platform of the 30S subunit. The chain is Small ribosomal subunit protein uS12 from Dehalococcoides mccartyi (strain ATCC BAA-2100 / JCM 16839 / KCTC 5957 / BAV1).